Consider the following 96-residue polypeptide: MNIRPLHDRVVVRRKEEEEKSAGGIVLPGSAKEKPNQGEVVAVGSGRVLDNGETRPVDVKVGDTVVFGKYAGSDTIEINGEELVILSESDIKAIIE.

Belongs to the GroES chaperonin family. As to quaternary structure, heptamer of 7 subunits arranged in a ring. Interacts with the chaperonin GroEL.

The protein resides in the cytoplasm. Its function is as follows. Together with the chaperonin GroEL, plays an essential role in assisting protein folding. The GroEL-GroES system forms a nano-cage that allows encapsulation of the non-native substrate proteins and provides a physical environment optimized to promote and accelerate protein folding. GroES binds to the apical surface of the GroEL ring, thereby capping the opening of the GroEL channel. This is Co-chaperonin GroES from Teredinibacter turnerae (strain ATCC 39867 / T7901).